Reading from the N-terminus, the 330-residue chain is Virulence plasmid integrase pGP8-D (330 aa).

The Core-binding (CB) domain maps to 39–124; it reads FSLFEVIMHW…SYISLTRFLN (86 aa). The Tyr recombinase domain maps to 152–327; that stretch reads VKTNAMNRLQ…SREDNASKKM (176 aa). Catalysis depends on residues R189, K214, H279, R282, and H305. Y314 functions as the O-(3'-phospho-DNA)-tyrosine intermediate in the catalytic mechanism.

The protein belongs to the 'phage' integrase family.

The chain is Virulence plasmid integrase pGP8-D from Chlamydia muridarum (strain MoPn / Nigg).